The chain runs to 228 residues: UPF0758 protein SH1266 (228 aa).

The 123-residue stretch at K102–F224 folds into the MPN domain. Zn(2+) contacts are provided by H173, H175, and D186. A JAMM motif motif is present at residues H173–D186.

Belongs to the UPF0758 family.

This Staphylococcus haemolyticus (strain JCSC1435) protein is UPF0758 protein SH1266.